The sequence spans 592 residues: UPF0329 protein ECU01_0110/ECU01_1500/ECU08_0040 (592 aa).

2 stretches are compositionally biased toward basic and acidic residues: residues 306-339 (RQRR…SKEK) and 353-362 (EAKEEEKKES). Positions 306–404 (RQRRREREIE…RKRYKIHRRV (99 aa)) are disordered.

This sequence belongs to the UPF0329 family.

The protein is UPF0329 protein ECU01_0110/ECU01_1500/ECU08_0040 of Encephalitozoon cuniculi (strain GB-M1) (Microsporidian parasite).